A 314-amino-acid polypeptide reads, in one-letter code: Transcription factor TCP20 (314 aa).

Disordered regions lie at residues 1 to 91 and 295 to 314; these read MDPK…RGRR and NHEEHQQESGEKDDSQGSGR. 2 stretches are compositionally biased toward basic and acidic residues: residues 38–49 and 77–89; these read DENRKPTTEIKD and SNKDRHTKVEGRG. The TCP domain occupies 78–132; sequence NKDRHTKVEGRGRRIRMPALCAARIFQLTRELGHKSDGETIQWLLQQAEPSIIAA.

Interacts with PURA1. Interacts with SPL.

The protein resides in the nucleus. Functionally, transcription factor that binds to the site II motif (3'-TGGGCC/T-5') in the promoter of PCNA-2 and to 3'-GCCCG/A-5' elements in the promoters of cyclin CYCB1-1 and ribosomal protein genes. This Arabidopsis thaliana (Mouse-ear cress) protein is Transcription factor TCP20 (TCP20).